We begin with the raw amino-acid sequence, 194 residues long: MYLDQIKTELLEAQDVLQKFIADENNIKLIQQAALLISDSFKQGGKVLSCGNGGSHCDAMHFAEELTGRYRENRPGYPAIAISDVSHLSCVSNDFGYDYVFSRYVEAVGKPGDVLFGLSTSGNSKNVLNAIQAAKQKDMKVIAMTGKDGGEMAGLADVEIRVPHFRYADRIQEIHIKVIHILMMLIEFEMAKDV.

The SIS domain maps to 37–194; sequence ISDSFKQGGK…LIEFEMAKDV (158 aa). Residue 52-54 coordinates substrate; the sequence is NGG. His-61 and Glu-65 together coordinate Zn(2+). Substrate-binding positions include Glu-65, 93–94, 119–121, Ser-124, and Gln-172; these read ND and STS. Zn(2+) is bound by residues Gln-172 and His-180.

This sequence belongs to the SIS family. GmhA subfamily. In terms of assembly, homotetramer. The cofactor is Zn(2+).

It localises to the cytoplasm. It catalyses the reaction 2 D-sedoheptulose 7-phosphate = D-glycero-alpha-D-manno-heptose 7-phosphate + D-glycero-beta-D-manno-heptose 7-phosphate. It participates in carbohydrate biosynthesis; D-glycero-D-manno-heptose 7-phosphate biosynthesis; D-glycero-alpha-D-manno-heptose 7-phosphate and D-glycero-beta-D-manno-heptose 7-phosphate from sedoheptulose 7-phosphate: step 1/1. In terms of biological role, catalyzes the isomerization of sedoheptulose 7-phosphate in D-glycero-D-manno-heptose 7-phosphate. This chain is Phosphoheptose isomerase, found in Actinobacillus succinogenes (strain ATCC 55618 / DSM 22257 / CCUG 43843 / 130Z).